The following is a 278-amino-acid chain: Elongation factor Ts (278 aa).

The tract at residues 82–85 is involved in Mg(2+) ion dislocation from EF-Tu; the sequence is TDFV.

The protein belongs to the EF-Ts family.

The protein localises to the cytoplasm. In terms of biological role, associates with the EF-Tu.GDP complex and induces the exchange of GDP to GTP. It remains bound to the aminoacyl-tRNA.EF-Tu.GTP complex up to the GTP hydrolysis stage on the ribosome. The chain is Elongation factor Ts from Streptomyces avermitilis (strain ATCC 31267 / DSM 46492 / JCM 5070 / NBRC 14893 / NCIMB 12804 / NRRL 8165 / MA-4680).